A 200-amino-acid chain; its full sequence is Serine/arginine-rich splicing factor RSZ23 (200 aa).

Residues 2–71 (ARVYVGNLDP…NGWRVELSTK (70 aa)) form the RRM domain. A CCHC-type zinc finger spans residues 86 to 103 (MKCYECGEPGHFARECRL). Positions 105–200 (IGSGGLGSGR…REESPYANNA (96 aa)) are disordered. A compositionally biased stretch (basic residues) spans 113–139 (GRRRSRSRSRSPRYRGRSRSRSPRYRR).

It belongs to the splicing factor SR family. Extensively phosphorylated on serine residues in the RS domain. In terms of tissue distribution, expressed in roots, leaves and immature seeds.

It is found in the nucleus. Involved in pre-mRNA splicing. In protoplast assay, enhances splicing efficiency of WAXY intron 1 and alters the selection of the 5'-splice sites by stimulating site 1 (proximal site). This chain is Serine/arginine-rich splicing factor RSZ23 (RSZ23), found in Oryza sativa subsp. japonica (Rice).